We begin with the raw amino-acid sequence, 163 residues long: Protein-export protein SecB (163 aa).

The protein belongs to the SecB family. In terms of assembly, homotetramer, a dimer of dimers. One homotetramer interacts with 1 SecA dimer.

The protein localises to the cytoplasm. Its function is as follows. One of the proteins required for the normal export of preproteins out of the cell cytoplasm. It is a molecular chaperone that binds to a subset of precursor proteins, maintaining them in a translocation-competent state. It also specifically binds to its receptor SecA. This chain is Protein-export protein SecB, found in Burkholderia cenocepacia (strain ATCC BAA-245 / DSM 16553 / LMG 16656 / NCTC 13227 / J2315 / CF5610) (Burkholderia cepacia (strain J2315)).